Here is a 276-residue protein sequence, read N- to C-terminus: Diaminopimelate epimerase (276 aa).

The substrate site is built by Asn13, Gln46, and Asn66. The Proton donor role is filled by Cys75. Substrate contacts are provided by residues 76-77 (GN), Asn159, Asn192, and 210-211 (ER). The Proton acceptor role is filled by Cys219. Substrate is bound at residue 220-221 (GT).

The protein belongs to the diaminopimelate epimerase family. As to quaternary structure, homodimer.

The protein localises to the cytoplasm. The enzyme catalyses (2S,6S)-2,6-diaminopimelate = meso-2,6-diaminopimelate. The protein operates within amino-acid biosynthesis; L-lysine biosynthesis via DAP pathway; DL-2,6-diaminopimelate from LL-2,6-diaminopimelate: step 1/1. Functionally, catalyzes the stereoinversion of LL-2,6-diaminopimelate (L,L-DAP) to meso-diaminopimelate (meso-DAP), a precursor of L-lysine and an essential component of the bacterial peptidoglycan. In Pseudoalteromonas translucida (strain TAC 125), this protein is Diaminopimelate epimerase.